Here is a 37-residue protein sequence, read N- to C-terminus: Calcitonin gene-related peptide (37 aa).

C2 and C7 form a disulfide bridge. Residue F37 is modified to Phenylalanine amide.

The protein belongs to the calcitonin family.

In terms of biological role, CGRP induces vasodilation. It dilates a variety of vessels including the coronary, cerebral and systemic vasculature. Its abundance in the CNS also points toward a neurotransmitter or neuromodulator role. The polypeptide is Calcitonin gene-related peptide (Pelophylax ridibundus (Marsh frog)).